We begin with the raw amino-acid sequence, 268 residues long: 4-pyridoxolactonase (268 aa).

Zn(2+)-binding residues include His96, His98, Asp100, His101, His185, Asp207, and His252. The Proton donor/acceptor role is filled by Asp100.

Belongs to the metallo-beta-lactamase superfamily. Homodimer. It depends on Zn(2+) as a cofactor.

It catalyses the reaction 4-pyridoxolactone + H2O = 4-pyridoxate + H(+). The protein operates within cofactor degradation; B6 vitamer degradation; 4-pyridoxate from pyridoxal: step 2/2. Inhibited by Hg(2+). In terms of biological role, involved in the degradation of pyridoxine or pyridoxamine (free, phosphate-unbound, forms of vitamin B6). Hydrolyzes 4-pyridoxolactone to 4-pyridoxic acid. Has lower activity toward N-hexanoyl-D,L-homoserine lactone, but is not active toward 5-pyridoxolactone and gamma-butyrolactone. This chain is 4-pyridoxolactonase, found in Mesorhizobium japonicum (strain LMG 29417 / CECT 9101 / MAFF 303099) (Mesorhizobium loti (strain MAFF 303099)).